A 108-amino-acid chain; its full sequence is Large ribosomal subunit protein eL36x (108 aa).

2 disordered regions span residues 13–34 (GHVVTKREQPPRPNNRKGKTSK) and 75–108 (KLGTHKRAKRKREEMSSVLRKMRSGGAGASEKKK). A compositionally biased stretch (basic residues) spans 75 to 84 (KLGTHKRAKR).

This sequence belongs to the eukaryotic ribosomal protein eL36 family.

The protein is Large ribosomal subunit protein eL36x (RPL36C) of Arabidopsis thaliana (Mouse-ear cress).